The sequence spans 490 residues: UDP-N-acetylmuramate--L-alanine ligase (490 aa).

126-132 (GTHGKTT) contributes to the ATP binding site.

It belongs to the MurCDEF family.

The protein localises to the cytoplasm. The catalysed reaction is UDP-N-acetyl-alpha-D-muramate + L-alanine + ATP = UDP-N-acetyl-alpha-D-muramoyl-L-alanine + ADP + phosphate + H(+). The protein operates within cell wall biogenesis; peptidoglycan biosynthesis. Its function is as follows. Cell wall formation. The polypeptide is UDP-N-acetylmuramate--L-alanine ligase (Baumannia cicadellinicola subsp. Homalodisca coagulata).